Reading from the N-terminus, the 885-residue chain is DNA polymerase eta (885 aa).

A UmuC domain is found at 18 to 274; it reads VLLVDMDCFF…LPVGKIKGLG (257 aa). Positions 22 and 23 each coordinate Mg(2+). Mn(2+) is bound by residues D22 and M23. An a 2'-deoxyribonucleoside 5'-triphosphate-binding site is contributed by R70. Mg(2+) contacts are provided by D125 and E126. Positions 125 and 126 each coordinate Mn(2+). The active site involves E126. 2 disordered regions span residues 599 to 653 and 658 to 677; these read AIEA…DLYV and VPPT…RKFD. Residues 608-618 show a composition bias toward acidic residues; it reads FEEDTEEETEL. Residues 628 to 649 are compositionally biased toward polar residues; sequence EGQSSDAGQEQDPNTLNDSTGN. The UBZ3-type 1 zinc finger occupies 701–737; that stretch reads DILPTIKCDQCGANIPDEVKSLQTHRDHHFAQELSRT. Residues C708, C711, H725, and H729 each contribute to the Zn(2+) site. Residues 722-783 form a disordered region; sequence LQTHRDHHFA…YSTAPPSNSI (62 aa). Basic and acidic residues predominate over residues 739-748; that stretch reads RSTEREERTQ. The span at 766-780 shows a compositional bias: low complexity; that stretch reads TAGSGSSSYSTAPPS. A UBZ3-type 2 zinc finger spans residues 798–832; that stretch reads SDPQMNQCPECKAFIKCVDMPEHLDYHVARNLQRE. Residues C805, C808, H820, and H824 each contribute to the Zn(2+) site. Residues 846–870 are disordered; it reads NKEKISPVQPKKQSQKKLNSTISAS.

The protein belongs to the DNA polymerase type-Y family. Interacts (via C-terminus) with nopo. It depends on Mg(2+) as a cofactor. Mn(2+) serves as cofactor. Ubiquitination enhanced by nopo. In terms of tissue distribution, expressed in ovaries and testes.

The protein localises to the nucleus. The enzyme catalyses DNA(n) + a 2'-deoxyribonucleoside 5'-triphosphate = DNA(n+1) + diphosphate. Its activity is regulated as follows. The enzyme in complex with the DNA substrate binds a third divalent metal cation. This binding is essential for catalyzing the DNA synthesis. Its function is as follows. DNA polymerase specifically involved in the DNA repair by translesion synthesis (TLS). Plays an important role in translesion synthesis, where the normal high-fidelity DNA polymerases cannot proceed and DNA synthesis stalls. Inserts one or 2 nucleotide(s) opposite the lesion. During homologous recombination (HR) repair, has a overlapping role with the error-prone translesion polymerase PolZ1/DNApol-zeta to initiate repair synthesis that is completed by end joining or another polymerase that can bind and reinitiate synthesis. Particularly important for the repair of UV-induced pyrimidine dimers and for hydroxyurea (HU)-induced DNA damage. Although inserts the correct base, may cause base transitions and transversions depending upon the context. Forms a Schiff base with 5'-deoxyribose phosphate at abasic sites, but does not have any lyase activity, preventing the release of the 5'-deoxyribose phosphate (5'-dRP) residue. This covalent trapping of the enzyme by the 5'-dRP residue inhibits its DNA synthetic activity during base excision repair, thereby avoiding high incidence of mutagenesis. This is DNA polymerase eta from Drosophila melanogaster (Fruit fly).